The primary structure comprises 359 residues: MDNSIVEENGNSSAASGSNDVVDVVAQQAAAAVGGGGGGGGGGGGGNPQQQQQNPQSTTAGGPTGATNNAQGGGVSSVLTTTANCNIQYPIQTLAQHGLQVSIWGPGAWCQLSSVRCYGSQPEVATKDVQSVIQANPSGVIQTAAGTQQQQQALAAATAMQKVVYVAKPPNSTVIHTTPGNAVQVRNKIPPTFPCKIKPEPNTQHPEDSDESLSDDDSQHHRSELTRRPSYNKIFTEISGPDMSGASLPMSDGVLNSQLAGTGAGGNAANSSLMQLDPTYYLSNRMSYNTNNSGIAEDQTRKREIRLQKNREAARECRRKKKEYIKCLENRVAVLENQNKALIEELKSLKELYCQTKND.

Disordered regions lie at residues 1–73 (MDNS…AQGG) and 185–238 (VRNK…FTEI). Positions 9 to 32 (NGNSSAASGSNDVVDVVAQQAAAA) are enriched in low complexity. Residues 33 to 47 (VGGGGGGGGGGGGGN) are compositionally biased toward gly residues. Residues 48-70 (PQQQQQNPQSTTAGGPTGATNNA) are compositionally biased toward low complexity. Residues 198–257 (KPEPNTQHPEDSDESLSDDDSQHHRSELTRRPSYNKIFTEISGPDMSGASLPMSDGVLNS) form the KID domain. 3 positions are modified to phosphoserine: Ser-209, Ser-212, and Ser-214. The segment covering 217–227 (DSQHHRSELTR) has biased composition (basic and acidic residues). The region spanning 300-359 (TRKREIRLQKNREAARECRRKKKEYIKCLENRVAVLENQNKALIEELKSLKELYCQTKND) is the bZIP domain. The basic motif stretch occupies residues 301-326 (RKREIRLQKNREAARECRRKKKEYIK). A leucine-zipper region spans residues 328 to 349 (LENRVAVLENQNKALIEELKSL).

This sequence belongs to the bZIP family. ATF subfamily. Homodimer. Most cells of the adult brain; cell bodies, but not neuropil.

Its subcellular location is the nucleus. Functionally, isoform E is a PKA-dependent transcriptional activator. Isoform J is a direct antagonist of activation by isoform E in cell culture. Binds the cAMP response element (CRE) (consensus: 5'-GTGACGT[AC][AG]-3'), a sequence present in many viral and cellular promoters. Has a role in long-term memory. In Drosophila melanogaster (Fruit fly), this protein is Cyclic AMP response element-binding protein B.